A 390-amino-acid chain; its full sequence is MNSLSEANTKFMFDLFQQFRKSKENNIFYSPISITSALGMVLLGAKDNTAQQISKVLHFDQVTENTTEKAATYHVDRSGNVHHQFQKLLTEFNKSTDAYELKIANKLFGEKTYQFLQEYLDAIKKFYQTSVESTDFANAPEESRKKINSWVESQTNEKIKNLFPDGTIGNDTTLVLVNAIYFKGQWENKFKKENTKEEKFWPNKNTYKSVQMMRQYNSFNFALLEDVQAKVLEIPYKGKDLSMIVLLPNEIDGLQKLEEKLTAEKLMEWTSLQNMRETCVDLHLPRFKMEESYDLKDTLRTMGMVNIFNGDADLSGMTWSHGLSVSKVLHKAFVEVTEEGVEAAAATAVVVVELSSPSTNEEFCCNHPFLFFIRQNKTNSILFYGRFSSP.

The residue at position 1 (Met-1) is an N-acetylmethionine.

It belongs to the serpin family. Ov-serpin subfamily. As to expression, squamous cells.

The protein resides in the cytoplasm. In terms of biological role, may act as a protease inhibitor to modulate the host immune response against tumor cells. The polypeptide is Serpin B4 (SERPINB4) (Homo sapiens (Human)).